Consider the following 138-residue polypeptide: Small ribosomal subunit protein uS11c (138 aa).

The segment at M1–V22 is disordered. A compositionally biased stretch (basic residues) spans G9–V22.

The protein belongs to the universal ribosomal protein uS11 family. In terms of assembly, part of the 30S ribosomal subunit.

The protein localises to the plastid. The protein resides in the chloroplast. The chain is Small ribosomal subunit protein uS11c from Arabis hirsuta (Hairy rock-cress).